The following is a 399-amino-acid chain: Replication-associated protein ORF4 (399 aa).

Residues Tyr-251 and Tyr-255 each act as O-(5'-phospho-DNA)-tyrosine intermediate in the active site.

Belongs to the microviridae Rep protein family.

It carries out the reaction ATP + (deoxyribonucleotide)n-3'-hydroxyl + 5'-phospho-(deoxyribonucleotide)m = (deoxyribonucleotide)n+m + AMP + diphosphate.. Its function is as follows. Plays an essential role in viral DNA replication. Binds the origin of replication and cleaves the dsDNA replicative form I (RFI) and becomes covalently bound to it via phosphotyrosine bond, generating the dsDNA replicative form II (RFII). In turn, viral DNA replication initiates at the 3'-OH of the cleavage site. After one round of rolling circle synthesis, protein ORF4 is linked to the newly synthesized ssDNA and joins the ends of the displaced strand to generate a circular single-stranded molecule ready to be packed into a virion. The polypeptide is Replication-associated protein ORF4 (Chlamydia psittaci (Chlamydophila psittaci)).